A 368-amino-acid polypeptide reads, in one-letter code: Putative potassium channel KAT5 (368 aa).

Transmembrane regions (helical) follow at residues 33–53 (WWHM…PFEL), 97–117 (LLNL…ARVE), and 132–152 (LLCV…WMVF). Positions 180 to 199 (CAVYWSITTLATVGYGDLHA) form an intramembrane region, pore-forming. Residues 206–226 (LFSIAFMLFNMGLTSYIIGNI) traverse the membrane as a helical segment. Position 225-344 (225-344 (NITNLVVRET…CIVFSNFILV (120 aa))) interacts with a nucleoside 3',5'-cyclic phosphate.

Belongs to the potassium channel family. Plant (TC 1.A.1.4) subfamily.

It is found in the membrane. Putative inward-rectifying potassium channel. The protein is Putative potassium channel KAT5 of Oryza sativa subsp. japonica (Rice).